A 63-amino-acid polypeptide reads, in one-letter code: Large ribosomal subunit protein uL29 (63 aa).

The protein belongs to the universal ribosomal protein uL29 family.

This Serratia proteamaculans (strain 568) protein is Large ribosomal subunit protein uL29.